Reading from the N-terminus, the 508-residue chain is Photosystem II CP47 reaction center protein (508 aa).

The next 6 membrane-spanning stretches (helical) occupy residues 21-36 (AVHIMHTALVAGWAGS), 101-115 (IVFSGLCFLAAIWHW), 140-156 (GIHLFLSGVACFGFGAF), 203-218 (IAAGTLGILAGLFHLS), 237-252 (VLSSSIAAVFFAAFVV), and 457-472 (SFALLFFFGHIWHGSR).

This sequence belongs to the PsbB/PsbC family. PsbB subfamily. PSII is composed of 1 copy each of membrane proteins PsbA, PsbB, PsbC, PsbD, PsbE, PsbF, PsbH, PsbI, PsbJ, PsbK, PsbL, PsbM, PsbT, PsbX, PsbY, PsbZ, Psb30/Ycf12, at least 3 peripheral proteins of the oxygen-evolving complex and a large number of cofactors. It forms dimeric complexes. Binds multiple chlorophylls. PSII binds additional chlorophylls, carotenoids and specific lipids. is required as a cofactor.

Its subcellular location is the plastid. It is found in the chloroplast thylakoid membrane. Its function is as follows. One of the components of the core complex of photosystem II (PSII). It binds chlorophyll and helps catalyze the primary light-induced photochemical processes of PSII. PSII is a light-driven water:plastoquinone oxidoreductase, using light energy to abstract electrons from H(2)O, generating O(2) and a proton gradient subsequently used for ATP formation. This chain is Photosystem II CP47 reaction center protein, found in Populus trichocarpa (Western balsam poplar).